Here is a 529-residue protein sequence, read N- to C-terminus: Transcription factor BIM1 (529 aa).

Disordered stretches follow at residues 1–91 (MELP…HVLP), 245–291 (KKES…RRSK), 425–450 (RVAS…EEVL), and 491–529 (AKQS…KTGQ). Over residues 76 to 86 (KPPPPAPPPPL) the composition is skewed to pro residues. 2 stretches are compositionally biased toward basic and acidic residues: residues 255-265 (HRVDLRVKADV) and 282-291 (SATEQRRRSK). The 51-residue stretch at 276-326 (TPRSKHSATEQRRRSKINDRFQMLRQLIPNSDQKRDKASFLLEVIEYIQFL) folds into the bHLH domain. Residues 426–438 (VASSEAVEPSPSS) are compositionally biased toward low complexity. Over residues 499-517 (FKDHEVREPVSRTRNDNVK) the composition is skewed to basic and acidic residues. The span at 518-529 (QTRKPKRLKTGQ) shows a compositional bias: basic residues.

Homodimer. Interacts with BZR2/BES1 through both C-terminal and bHLH domains. Also interacts with LHW. Expressed constitutively in roots.

It is found in the nucleus. Its function is as follows. Positive brassinosteroid-signaling protein. Transcription factor that bind specifically to the DNA sequence 5'-CANNTG-3'(E box). Can bind individually to the promoter as a homodimer or synergistically as a heterodimer with BZR2/BES1. Does not itself activate transcription but enhances BZR2/BES1-mediated target gene activation. This chain is Transcription factor BIM1 (BIM1), found in Arabidopsis thaliana (Mouse-ear cress).